A 545-amino-acid chain; its full sequence is Cleavage and polyadenylation specificity factor subunit 6 (545 aa).

The segment at 37 to 69 (ISPSANNGDAPEDRDYLDSLPAPGGNEGSKGAP) is disordered. The RRM domain maps to 81 to 161 (IALYIGNLTW…QNPIVTPCNK (81 aa)). Over residues 165–180 (SQFEMQSRKSTQSGQM) the composition is skewed to polar residues. Disordered regions lie at residues 165–404 (SQFE…PLSE) and 478–545 (YGSV…YRHR). The segment covering 184–200 (GKAGPPGSGSRGGGFPP) has biased composition (gly residues). Composition is skewed to pro residues over residues 220–230 (PVGPGGPPPHF), 237–265 (PRLP…PLGG), 287–363 (PMGP…PPGN), and 372–383 (GPPPGDPYGRPP). 2 stretches are compositionally biased toward basic and acidic residues: residues 384–397 (PYDR…DMDA) and 483–497 (GRRE…SRSR). Basic residues predominate over residues 498-508 (EKSRRHKSRSR). A compositionally biased stretch (basic and acidic residues) spans 509–545 (DRHEDYYRERSRERDRHRERDRDRERDREREREYRHR).

Belongs to the RRM CPSF6/7 family. In terms of assembly, component of the cleavage factor Im (CFIm) complex.

It is found in the nucleus. The protein localises to the nucleoplasm. The protein resides in the nucleus speckle. It localises to the cytoplasm. Component of the cleavage factor Im (CFIm) complex that functions as an activator of the pre-mRNA 3'-end cleavage and polyadenylation processing required for the maturation of pre-mRNA into functional mRNAs. CFIm contributes to the recruitment of multiprotein complexes on specific sequences on the pre-mRNA 3'-end, so called cleavage and polyadenylation signals (pA signals). Most pre-mRNAs contain multiple pA signals, resulting in alternative cleavage and polyadenylation (APA) producing mRNAs with variable 3'-end formation. The CFIm complex acts as a key regulator of cleavage and polyadenylation site choice during APA through its binding to 5'-UGUA-3' elements localized in the 3'-untranslated region (UTR) for a huge number of pre-mRNAs. Plays a role in mRNA export. The polypeptide is Cleavage and polyadenylation specificity factor subunit 6 (Danio rerio (Zebrafish)).